The primary structure comprises 161 residues: Allophycocyanin alpha subunit (161 aa).

A (2R,3E)-phycocyanobilin-binding site is contributed by C81.

This sequence belongs to the phycobiliprotein family. As to quaternary structure, heterodimer of an alpha and a beta chain. Contains one covalently linked phycocyanobilin chromophore. The chromophore on position 81 is added by the phycocyanobilin lyase CpcUS.

The protein localises to the cellular thylakoid membrane. In terms of biological role, light-harvesting photosynthetic bile pigment-protein from the phycobiliprotein complex. Allophycocyanin has a maximum absorption at approximately 650 nanometers. The sequence is that of Allophycocyanin alpha subunit (apcA) from Picosynechococcus sp. (strain ATCC 27264 / PCC 7002 / PR-6) (Agmenellum quadruplicatum).